Here is a 1258-residue protein sequence, read N- to C-terminus: Phosphatidylinositol 3,4,5-trisphosphate 5-phosphatase 2 (1258 aa).

The 97-residue stretch at 21-117 folds into the SH2 domain; sequence WYHRDLSRAA…GLVCALLLPV (97 aa). A compositionally biased stretch (basic and acidic residues) spans 119 to 132; the sequence is GEREPDPPDDRDAS. The tract at residues 119–180 is disordered; it reads GEREPDPPDD…AESAPNGLST (62 aa). Ser132 carries the post-translational modification Phosphoserine. A compositionally biased stretch (polar residues) spans 145–155; it reads SGSTSISAPTG. Residues 156–166 are compositionally biased toward pro residues; it reads PSSPLPAPETP. Thr165 carries the phosphothreonine modification. Ser241 and Ser352 each carry phosphoserine. Tyr886 is subject to Phosphotyrosine. A Phosphoserine modification is found at Ser890. The tract at residues 897-1118 is disordered; that stretch reads GAKSKAPSVS…FLGEVASGDD (222 aa). Residues 938-950 are compositionally biased toward pro residues; it reads PPPTGRPPAPPRA. Residues 944–949 carry the SH3-binding motif; that stretch reads PPAPPR. The segment covering 951–965 has biased composition (basic and acidic residues); it reads APREEPLTPRLKPEG. The residue at position 958 (Thr958) is a Phosphothreonine. An NPXY motif motif is present at residues 983–986; it reads NPAY. At Tyr986 the chain carries Phosphotyrosine; by SRC. Pro residues-rich tracts occupy residues 996–1007, 1048–1059, and 1087–1104; these read LLPPEPPSPARA, LPPPDFPPPPLP, and GPPP…PGPS. Ser1131 is subject to Phosphoserine. A phosphotyrosine mark is found at Tyr1135 and Tyr1162. The region spanning 1196–1258 is the SAM domain; the sequence is LGEAGMSAWL…LLLDTLQLSK (63 aa). Residue Ser1257 is modified to Phosphoserine.

The protein belongs to the inositol 1,4,5-trisphosphate 5-phosphatase family. As to quaternary structure, interacts with tyrosine phosphorylated form of SHC1. Interacts with EGFR. Upon stimulation by the EGF signaling pathway, it forms a complex with SHC1 and EGFR. Interacts with cytoskeletal protein SORBS3/vinexin, promoting its localization to the periphery of cells. Forms a complex with filamin (FLNA or FLNB), actin, GPIb (GP1BA or GP1BB) that regulates cortical and submembraneous actin. Interacts with c-Met/MET, when c-Met/MET is phosphorylated on 'Tyr-1356'. Interacts with p130Cas/BCAR1. Interacts with CENTD3/ARAP3 via its SAM domain. Interacts with c-Cbl/CBL and CAP/SORBS1. Interacts with activated EPHA2 receptor. Interacts with receptor FCGR2A. Interacts with receptor FCGR2B. Interacts with tyrosine kinase ABL1. Interacts with tyrosine kinase TEC. Interacts with CSF1R. Interacts (via N-terminus) with SH3YL1 (via SH3 domain). Interacts with FCRL6 (tyrosine phosphorylated form). Interacts (via SH2 domain) with tyrosine phosphorylated KLRC1 (via ITIM). Interacts with NEDD9/HEF1. Tyrosine phosphorylated by the members of the SRC family after exposure to a diverse array of extracellular stimuli such as insulin, growth factors such as EGF or PDGF, chemokines, integrin ligands and hypertonic and oxidative stress. May be phosphorylated upon IgG receptor FCGR2B-binding. Phosphorylated at Tyr-986 following cell attachment and spreading. Phosphorylated at Tyr-1162 following EGF signaling pathway stimulation. Phosphorylated at Thr-958 in response to PDGF. Widely expressed, most prominently in skeletal muscle, heart and brain. Present in platelets. Expressed in transformed myeloid cells and in primary macrophages, but not in peripheral blood monocytes.

It localises to the cytoplasm. Its subcellular location is the cytosol. The protein resides in the cytoskeleton. It is found in the membrane. The protein localises to the cell projection. It localises to the filopodium. Its subcellular location is the lamellipodium. The protein resides in the basal cell membrane. It is found in the nucleus. The protein localises to the nucleus speckle. It localises to the spindle pole. It catalyses the reaction a 1,2-diacyl-sn-glycero-3-phospho-(1D-myo-inositol-3,4,5-trisphosphate) + H2O = a 1,2-diacyl-sn-glycero-3-phospho-(1D-myo-inositol-3,4-bisphosphate) + phosphate. It carries out the reaction 1,2-dioctanoyl-sn-glycero-3-phospho-(1D-myo-inositol-3,4,5-trisphosphate) + H2O = 1,2-dioctanoyl-sn-glycero-3-phospho-(1D-myo-inositol-3,4-bisphosphate) + phosphate. The enzyme catalyses 1,2-dihexadecanoyl-sn-glycero-3-phospho-(1D-myo-inositol-3,4,5-trisphosphate) + H2O = 1,2-dihexadecanoyl-sn-glycero-3-phospho-(1D-myo-inositol-3,4-bisphosphate) + phosphate. With respect to regulation, activated upon translocation to the sites of synthesis of PtdIns(3,4,5)P3 in the membrane. Enzymatic activity is enhanced in the presence of phosphatidylserine. Phosphatidylinositol (PtdIns) phosphatase that specifically hydrolyzes the 5-phosphate of phosphatidylinositol-3,4,5-trisphosphate (PtdIns(3,4,5)P3) to produce PtdIns(3,4)P2, thereby negatively regulating the PI3K (phosphoinositide 3-kinase) pathways. Required for correct mitotic spindle orientation and therefore progression of mitosis. Plays a central role in regulation of PI3K-dependent insulin signaling, although the precise molecular mechanisms and signaling pathways remain unclear. While overexpression reduces both insulin-stimulated MAP kinase and Akt activation, its absence does not affect insulin signaling or GLUT4 trafficking. Confers resistance to dietary obesity. May act by regulating AKT2, but not AKT1, phosphorylation at the plasma membrane. Part of a signaling pathway that regulates actin cytoskeleton remodeling. Required for the maintenance and dynamic remodeling of actin structures as well as in endocytosis, having a major impact on ligand-induced EGFR internalization and degradation. Participates in regulation of cortical and submembraneous actin by hydrolyzing PtdIns(3,4,5)P3 thereby regulating membrane ruffling. Regulates cell adhesion and cell spreading. Required for HGF-mediated lamellipodium formation, cell scattering and spreading. Acts as a negative regulator of EPHA2 receptor endocytosis by inhibiting via PI3K-dependent Rac1 activation. Acts as a regulator of neuritogenesis by regulating PtdIns(3,4,5)P3 level and is required to form an initial protrusive pattern, and later, maintain proper neurite outgrowth. Acts as a negative regulator of the FC-gamma-RIIA receptor (FCGR2A). Mediates signaling from the FC-gamma-RIIB receptor (FCGR2B), playing a central role in terminating signal transduction from activating immune/hematopoietic cell receptor systems. Involved in EGF signaling pathway. Upon stimulation by EGF, it is recruited by EGFR and dephosphorylates PtdIns(3,4,5)P3. Plays a negative role in regulating the PI3K-PKB pathway, possibly by inhibiting PKB activity. Down-regulates Fc-gamma-R-mediated phagocytosis in macrophages independently of INPP5D/SHIP1. In macrophages, down-regulates NF-kappa-B-dependent gene transcription by regulating macrophage colony-stimulating factor (M-CSF)-induced signaling. Plays a role in the localization of AURKA and NEDD9/HEF1 to the basolateral membrane at interphase in polarized cysts, thereby mediates cell cycle homeostasis, cell polarization and cilia assembly. Additionally promotion of cilia growth is also facilitated by hydrolysis of (PtdIns(3,4,5)P3) to PtdIns(3,4)P2. Promotes formation of apical membrane-initiation sites during the initial stages of lumen formation via Rho family-induced actin filament organization and CTNNB1 localization to cell-cell contacts. May also hydrolyze PtdIns(1,3,4,5)P4, and could thus affect the levels of the higher inositol polyphosphates like InsP6. Involved in endochondral ossification. The sequence is that of Phosphatidylinositol 3,4,5-trisphosphate 5-phosphatase 2 from Homo sapiens (Human).